The primary structure comprises 147 residues: Diaminohydroxyphosphoribosylamino-pyrimidine deaminase (147 aa).

Positions 1–122 (MKDRFYMTRA…LYLRKKGISV (122 aa)) constitute a CMP/dCMP-type deaminase domain. Position 50 (histidine 50) interacts with Zn(2+). Glutamate 52 functions as the Proton donor in the catalytic mechanism. Cysteine 75 and cysteine 84 together coordinate Zn(2+).

Belongs to the cytidine and deoxycytidylate deaminase family. Zn(2+) serves as cofactor.

It carries out the reaction 2,5-diamino-6-hydroxy-4-(5-phosphoribosylamino)-pyrimidine + H2O + H(+) = 5-amino-6-(5-phospho-D-ribosylamino)uracil + NH4(+). Its pathway is cofactor biosynthesis; riboflavin biosynthesis; 5-amino-6-(D-ribitylamino)uracil from GTP: step 2/4. The chain is Diaminohydroxyphosphoribosylamino-pyrimidine deaminase (ribD1) from Buchnera aphidicola subsp. Schizaphis graminum (strain Sg).